Reading from the N-terminus, the 211-residue chain is Uridine kinase (211 aa).

Position 12–19 (12–19 (GGSGSGKT)) interacts with ATP.

It belongs to the uridine kinase family.

It localises to the cytoplasm. It carries out the reaction uridine + ATP = UMP + ADP + H(+). The catalysed reaction is cytidine + ATP = CMP + ADP + H(+). Its pathway is pyrimidine metabolism; CTP biosynthesis via salvage pathway; CTP from cytidine: step 1/3. It functions in the pathway pyrimidine metabolism; UMP biosynthesis via salvage pathway; UMP from uridine: step 1/1. The sequence is that of Uridine kinase (udk) from Bacillus subtilis (strain 168).